The sequence spans 258 residues: U6 snRNA phosphodiesterase 1 (258 aa).

The tract at residues 1-20 (MALVDYGGSSSSASEDEDCT) is disordered. His-117 acts as the Proton acceptor in catalysis. Residues 117-119 (HLS), Tyr-200, and 202-208 (PASFHVS) contribute to the AMP site. Residues Tyr-200 and 204–208 (SFHVS) contribute to the UMP site. His-206 functions as the Proton donor in the catalytic mechanism.

Belongs to the 2H phosphoesterase superfamily. USB1 family.

The protein localises to the nucleus. It carries out the reaction a 3'-end uridylyl-uridine-RNA = a 3'-end 2',3'-cyclophospho-uridine-RNA + uridine. 3'-5' RNA exonuclease that trims the 3' end of oligo(U) tracts of the pre-U6 small nuclear RNA (snRNA) molecule, leading to the formation of a mature U6 snRNA 3' end-terminated with a 2',3'-cyclic phosphate. Participates in the U6 snRNA 3' end processing that prevents U6 snRNA degradation. The chain is U6 snRNA phosphodiesterase 1 from Drosophila melanogaster (Fruit fly).